The primary structure comprises 132 residues: Small ribosomal subunit protein uS8 (132 aa).

This sequence belongs to the universal ribosomal protein uS8 family. In terms of assembly, part of the 30S ribosomal subunit. Contacts proteins S5 and S12.

Functionally, one of the primary rRNA binding proteins, it binds directly to 16S rRNA central domain where it helps coordinate assembly of the platform of the 30S subunit. The chain is Small ribosomal subunit protein uS8 from Coprothermobacter proteolyticus (strain ATCC 35245 / DSM 5265 / OCM 4 / BT).